A 282-amino-acid polypeptide reads, in one-letter code: Tryptophan 2,3-dioxygenase (282 aa).

Residues 51-55 (FIIQH), Tyr113, and Arg117 each bind substrate. His240 provides a ligand contact to heme. Thr254 contributes to the substrate binding site.

Belongs to the tryptophan 2,3-dioxygenase family. Homotetramer. Requires heme as cofactor.

The enzyme catalyses L-tryptophan + O2 = N-formyl-L-kynurenine. It functions in the pathway amino-acid degradation; L-tryptophan degradation via kynurenine pathway; L-kynurenine from L-tryptophan: step 1/2. Its function is as follows. Heme-dependent dioxygenase that catalyzes the oxidative cleavage of the L-tryptophan (L-Trp) pyrrole ring and converts L-tryptophan to N-formyl-L-kynurenine. Catalyzes the oxidative cleavage of the indole moiety. This chain is Tryptophan 2,3-dioxygenase, found in Polaromonas naphthalenivorans (strain CJ2).